A 289-amino-acid polypeptide reads, in one-letter code: Minor capsid protein P10 (289 aa).

Residues 1 to 21 (MMNFILVLLIVAMIGTILVSE) form a hydrophobic region.

In terms of assembly, interacts with the major capsid protein.

It localises to the virion. Functionally, one of the minor capsid proteins that constitute a network internal to the major capsid proteins and outside the lipid membrane. The minor capsid proteins glue and stabilize the capsomers. The polypeptide is Minor capsid protein P10 (Chlorella (PBCV-1)).